The following is a 275-amino-acid chain: Large ribosomal subunit protein uL2 (275 aa).

Residues 223 to 275 are disordered; sequence AAMNANDHPHGGGEAKAGQGNPHPVTPWGVPTKGYKTRKNKRTQQFIVRDRRG.

Belongs to the universal ribosomal protein uL2 family. In terms of assembly, part of the 50S ribosomal subunit. Forms a bridge to the 30S subunit in the 70S ribosome.

One of the primary rRNA binding proteins. Required for association of the 30S and 50S subunits to form the 70S ribosome, for tRNA binding and peptide bond formation. It has been suggested to have peptidyltransferase activity; this is somewhat controversial. Makes several contacts with the 16S rRNA in the 70S ribosome. This chain is Large ribosomal subunit protein uL2, found in Xanthomonas campestris pv. campestris (strain 8004).